The sequence spans 477 residues: Myc-associated zinc finger protein (477 aa).

Disordered stretches follow at residues 59 to 78 and 121 to 144; these read AQSP…APAA and TVDT…SAPA. Pro residues predominate over residues 130–140; the sequence is PPAPPPPPPAV. C2H2-type zinc fingers lie at residues 190 to 212, 279 to 301, 307 to 329, and 337 to 360; these read YICA…EAIH, HACE…KLSH, YQCP…VRSH, and YNCS…RQVH. Serine 361 is subject to Phosphoserine. The segment at 366–388 adopts a C2H2-type 5 zinc-finger fold; sequence FKCEKCEAAFATKDRLRAHTVRH. Residues 392-413 form a C2H2-type 6; atypical zinc finger; it reads VPCHVCGKMLSSAYISDHMKVH.

Interacts with BPTF. As to expression, expressed in Purkinje cells in the brain (at protein level).

It is found in the nucleus. Functionally, transcriptional regulator. Acts as a transcriptional activator that binds to purine-rich GAGA sites found in the promoter of many genes including insulin I and II and islet amyloid polypeptide. The sequence is that of Myc-associated zinc finger protein (Maz) from Mus musculus (Mouse).